The sequence spans 168 residues: Phosphopantetheine adenylyltransferase (168 aa).

Residue Thr-13 participates in substrate binding. ATP is bound by residues 13-14 (TF) and His-21. Substrate contacts are provided by Lys-45, Leu-78, and Arg-92. Residues 93–95 (GLR), Glu-103, and 128–134 (TQFISSS) contribute to the ATP site.

It belongs to the bacterial CoaD family. Homohexamer. Requires Mg(2+) as cofactor.

It localises to the cytoplasm. The enzyme catalyses (R)-4'-phosphopantetheine + ATP + H(+) = 3'-dephospho-CoA + diphosphate. The protein operates within cofactor biosynthesis; coenzyme A biosynthesis; CoA from (R)-pantothenate: step 4/5. Reversibly transfers an adenylyl group from ATP to 4'-phosphopantetheine, yielding dephospho-CoA (dPCoA) and pyrophosphate. This chain is Phosphopantetheine adenylyltransferase, found in Wolbachia pipientis subsp. Culex pipiens (strain wPip).